The chain runs to 359 residues: 4-galactosyl-N-acetylglucosaminide 3-alpha-L-fucosyltransferase 9 (359 aa).

Over 1–11 (MTSTSKGILRP) the chain is Cytoplasmic. A helical; Signal-anchor for type II membrane protein transmembrane segment spans residues 12-32 (FLIVCIILGCFVACLLIYIKP). The Lumenal portion of the chain corresponds to 33–359 (TNSWVFSPME…VGNLEKWFWN (327 aa)). A glycan (N-linked (GlcNAc...) asparagine) is linked at Asn62. The segment at 63–168 (ETTILVWVWP…RRDSDIQVPY (106 aa)) is acceptor-binding. Residue Gln75 participates in a beta-D-galactosyl-(1-&gt;4)-N-acetyl-beta-D-glucosaminyl derivative binding. 3 cysteine pairs are disulfide-bonded: Cys82/Cys335, Cys91/Cys338, and Cys190/Cys238. N-linked (GlcNAc...) asparagine glycosylation is present at Asn101. Position 137 (Glu137) interacts with a beta-D-galactosyl-(1-&gt;4)-N-acetyl-beta-D-glucosaminyl derivative. Residue Glu137 is the Nucleophile of the active site. A GDP-beta-L-fucose-binding site is contributed by Glu137. Asn153 carries N-linked (GlcNAc...) asparagine glycosylation. GDP-beta-L-fucose-binding residues include Tyr168, Val192, Ser194, Asn195, Arg202, Val226, Tyr241, Asn246, Tyr252, Glu255, and Lys256. The interval 169–326 (GFLTVSTSPF…NWRKDFTVNL (158 aa)) is donor-binding. Residues 327 to 359 (PRFWESHACLACDHVKRHQEYKSVGNLEKWFWN) form an acceptor-binding region.

It belongs to the glycosyltransferase 10 family. As to quaternary structure, homodimer. N-glycosylated with complex-type N-glycans.

The protein resides in the golgi apparatus. It is found in the trans-Golgi network membrane. It localises to the golgi apparatus membrane. It carries out the reaction a beta-D-galactosyl-(1-&gt;4)-N-acetyl-beta-D-glucosaminyl derivative + GDP-beta-L-fucose = a beta-D-galactosyl-(1-&gt;4)-[alpha-L-fucosyl-(1-&gt;3)]-N-acetyl-beta-D-glucosaminyl derivative + GDP + H(+). The catalysed reaction is an alpha-Neu5Ac-(2-&gt;3)-beta-D-Gal-(1-&gt;4)-beta-D-GlcNAc-(1-&gt;3)-beta-D-Gal-(1-&gt;4)-beta-D-GlcNAc derivative + GDP-beta-L-fucose = an alpha-Neu5Ac-(2-&gt;3)-beta-D-Gal-(1-&gt;4)-beta-D-GlcNAc-(1-&gt;3)-beta-D-Gal-(1-&gt;4)-[alpha-L-Fuc-(1-&gt;3)]-beta-D-GlcNAc derivative + GDP + H(+). The enzyme catalyses alpha-N-glycoloylneuraminosyl-(2-&gt;3)-beta-D-galactosyl-(1-&gt;4)-N-acetyl-beta-D-glucosaminyl-(1-&gt;3)-beta-D-galactosyl-(1-&gt;4)-N-acetyl-beta-D-glucosaminyl-(1-&gt;3)-beta-D-galactosyl-(1-&gt;4)-beta-D-glucosyl-(1&lt;-&gt;1')-ceramide + GDP-beta-L-fucose = alpha-N-glycoloylneuraminosyl-(2-&gt;3)-beta-D-galactosyl-(1-&gt;4)-N-acetyl-beta-D-glucosaminyl-(1-&gt;3)-beta-D-galactosyl-(1-&gt;4)-[alpha-L-fucosyl-(1-&gt;3)]-N-acetyl-beta-D-glucosaminyl-(1-&gt;3)-beta-D-galactosyl-(1-&gt;4)-beta-D-glucosyl-(1&lt;-&gt;1')-ceramide + GDP + H(+). It catalyses the reaction alpha-D-galactosyl-(1-&gt;3)-beta-D-galactosyl-(1-&gt;4)-N-acetyl-beta-D-glucosaminyl-(1-&gt;3)-beta-D-galactosyl-(1-&gt;4)-beta-D-glucosyl-(1&lt;-&gt;1')-ceramide + GDP-beta-L-fucose = a neolactoside IV(3)-alpha-Gal,III(3)-alpha-Fuc-nLc4Cer + GDP + H(+). It carries out the reaction a neolactoside nLc4Cer + GDP-beta-L-fucose = a neolactoside III(3)-alpha-Fuc-nLc4Cer + GDP + H(+). The catalysed reaction is an N-acetyl-alpha-neuraminyl-(2-&gt;3)-beta-D-galactosyl-(1-&gt;4)-N-acetyl-beta-D-glucosaminyl derivative + GDP-beta-L-fucose = an alpha-Neu5Ac-(2-&gt;3)-beta-D-Gal-(1-&gt;4)-[alpha-L-Fuc-(1-&gt;3)]-beta-D-GlcNAc derivative + GDP + H(+). The enzyme catalyses beta-D-Gal-(1-&gt;4)-beta-D-GlcNAc-(1-&gt;3)-beta-D-Gal-(1-&gt;4)-D-Glc + GDP-beta-L-fucose = beta-D-Gal-(1-&gt;4)-[alpha-L-Fuc-(1-&gt;3)]-beta-D-GlcNAc-(1-&gt;3)-beta-D-Gal-(1-&gt;4)-D-Glc + GDP + H(+). It catalyses the reaction an alpha-L-Fuc-(1-&gt;2)-beta-D-Gal-(1-&gt;4)-beta-D-GlcNAc derivative + GDP-beta-L-fucose = an alpha-L-Fuc-(1-&gt;2)-beta-D-Gal-(1-&gt;4)-[alpha-L-Fuc-(1-&gt;3)]-beta-D-GlcNAc derivative + GDP + H(+). It participates in protein modification; protein glycosylation. The protein operates within glycolipid biosynthesis. Its activity is regulated as follows. Activated by Mn2+. Its function is as follows. Catalyzes alpha(1-&gt;3) linkage of fucosyl moiety transferred from GDP-beta-L-fucose to N-acetyl glucosamine (GlcNAc) within type 2 lactosamine (LacNAc, beta-D-Gal-(1-&gt;4)-beta-D-GlcNAc-) glycan attached to glycolipids and N- or O-linked glycoproteins. Fucosylates distal type 2 LacNAc and its fucosylated (H-type 2 LacNAc) and sialylated (sialyl-type 2 LacNAc) derivatives to form Lewis x (Lex) (CD15) and Lewis y (Ley) antigenic epitopes involved in cell adhesion and differentiation. Generates Lex epitopes in the brain, presumably playing a role in the maintenance of neuronal stemness and neurite outgrowth in progenitor neural cells. Fucosylates the internal type 2 LacNAc unit of the polylactosamine chain to form VIM-2 antigen that serves as recognition epitope for SELE. Can also modify milk oligosaccharides in particular type 2 tetrasaccharide LNnT. In Rattus norvegicus (Rat), this protein is 4-galactosyl-N-acetylglucosaminide 3-alpha-L-fucosyltransferase 9.